Reading from the N-terminus, the 818-residue chain is Fibrous sheath CABYR-binding protein (818 aa).

A disordered region spans residues 1–61 (MEEKDESEQS…PKAALSIGNI (61 aa)). Ser25, Ser57, and Ser182 each carry phosphoserine. 2 disordered regions span residues 195-727 (SFSK…PFIT) and 773-805 (LESG…NEGV). Composition is skewed to low complexity over residues 490–511 (SPPA…PAEE), 544–560 (EAPA…PAEE), and 697–715 (AELQ…VSVE). Basic and acidic residues predominate over residues 773–794 (LESGNLDDKPKSEEPLERDTIP).

Interacts with CABYR. Interacts with ROPN1 and ROPN1L; the interaction increases upon spermatozoa capacitation conditions. In terms of processing, phosphorylated by PKA upon spermatozoa capacitation conditions.

Its subcellular location is the cell projection. The protein localises to the cilium. It is found in the flagellum. In terms of biological role, may be involved in the later stages of fibrous sheath biogenesis and spermatozoa capacitation. Inhibits ROPN1 and ROPN1L SUMOylation. Binds calcium. This Bos taurus (Bovine) protein is Fibrous sheath CABYR-binding protein.